A 254-amino-acid chain; its full sequence is U3 small nucleolar RNA-associated protein NOL7 (254 aa).

The tract at residues 1–90 (MVQLRPRLSR…ASARRDKTLL (90 aa)) is disordered. Acidic residues-rich tracts occupy residues 18–31 (MVDEDQAASEEEEA) and 48–61 (PLDEEEDADDEAPE). Residues 71–90 (EAREEELRVRASARRDKTLL) show a composition bias toward basic and acidic residues. A Glycyl lysine isopeptide (Lys-Gly) (interchain with G-Cter in SUMO2) cross-link involves residue lysine 127. Phosphoserine is present on serine 129. Lysine 157 is covalently cross-linked (Glycyl lysine isopeptide (Lys-Gly) (interchain with G-Cter in SUMO2)). The segment at 235–254 (NAKRFKKRWMAKKMKKKTYK) is disordered.

The protein belongs to the UTP16 family. As to quaternary structure, part of the small subunit (SSU) processome, composed of more than 70 proteins and the RNA chaperone small nucleolar RNA (snoRNA) U3.

Its subcellular location is the nucleus. The protein localises to the nucleolus. Functionally, functions as part of the small subunit (SSU) processome, first precursor of the small eukaryotic ribosomal subunit that coordinates the first two steps of ribosome biogenesis in transcription of the primary transcript pre-RNA and pre-18S processing. During the assembly of the SSU processome in the nucleolus, many ribosome biogenesis factors, an RNA chaperone and ribosomal proteins associate with the nascent pre-rRNA and work in concert to generate RNA folding, modifications, rearrangements and cleavage as well as targeted degradation of pre-ribosomal RNA by the RNA exosome. This subunit is required for processing of the 5'-external transcribed spacer sequence (5'ETS) of the primary transcript pre-rRNA to yield the 18S rRNA. Also plays a role in maintaining early pre-rRNA levels, either by assisting in its transcription or stability. The polypeptide is U3 small nucleolar RNA-associated protein NOL7 (Nol7) (Mus musculus (Mouse)).